The following is an 877-amino-acid chain: Alanine--tRNA ligase (877 aa).

Residues histidine 563, histidine 567, cysteine 665, and histidine 669 each contribute to the Zn(2+) site.

The protein belongs to the class-II aminoacyl-tRNA synthetase family. It depends on Zn(2+) as a cofactor.

Its subcellular location is the cytoplasm. The catalysed reaction is tRNA(Ala) + L-alanine + ATP = L-alanyl-tRNA(Ala) + AMP + diphosphate. Catalyzes the attachment of alanine to tRNA(Ala) in a two-step reaction: alanine is first activated by ATP to form Ala-AMP and then transferred to the acceptor end of tRNA(Ala). Also edits incorrectly charged Ser-tRNA(Ala) and Gly-tRNA(Ala) via its editing domain. The chain is Alanine--tRNA ligase from Thermoanaerobacter pseudethanolicus (strain ATCC 33223 / 39E) (Clostridium thermohydrosulfuricum).